The chain runs to 199 residues: MSNLENLTSKIIEDANKEAEKLLSEAKKEENEIVDEKVKKANKAKEQIIEKTKREAKTKAERVISNTHLKVRNNKLEAKQEMINKVFDEAVIKLQNLPQEEYLNFIKNSILSLDIEGDEEIIVSSNDKDKIDISFMLTLNNKLKDKGKKELLKISNENRDIKGGFILYKNGIEINNSFEALVDSLRDELEQEIIEALFS.

It belongs to the V-ATPase E subunit family.

Its function is as follows. Produces ATP from ADP in the presence of a proton gradient across the membrane. This is V-type proton ATPase subunit E from Clostridium botulinum (strain Loch Maree / Type A3).